Consider the following 122-residue polypeptide: Large ribosomal subunit protein uL18 (122 aa).

Residues 1–20 (MLKKVSKNTNRQGRHQRVRN) show a composition bias toward basic residues. Residues 1–22 (MLKKVSKNTNRQGRHQRVRNKI) are disordered.

It belongs to the universal ribosomal protein uL18 family. Part of the 50S ribosomal subunit; part of the 5S rRNA/L5/L18/L25 subcomplex. Contacts the 5S and 23S rRNAs.

This is one of the proteins that bind and probably mediate the attachment of the 5S RNA into the large ribosomal subunit, where it forms part of the central protuberance. The protein is Large ribosomal subunit protein uL18 of Alkaliphilus metalliredigens (strain QYMF).